We begin with the raw amino-acid sequence, 354 residues long: Uroporphyrinogen decarboxylase (354 aa).

Residues 27 to 31 (RQAGR), aspartate 77, tyrosine 154, threonine 209, and histidine 327 contribute to the substrate site.

It belongs to the uroporphyrinogen decarboxylase family. As to quaternary structure, homodimer.

It is found in the cytoplasm. It catalyses the reaction uroporphyrinogen III + 4 H(+) = coproporphyrinogen III + 4 CO2. Its pathway is porphyrin-containing compound metabolism; protoporphyrin-IX biosynthesis; coproporphyrinogen-III from 5-aminolevulinate: step 4/4. Its function is as follows. Catalyzes the decarboxylation of four acetate groups of uroporphyrinogen-III to yield coproporphyrinogen-III. The sequence is that of Uroporphyrinogen decarboxylase from Salmonella agona (strain SL483).